Reading from the N-terminus, the 1177-residue chain is DNA-directed RNA polymerase subunit beta' (1177 aa).

Positions 60, 62, 75, and 78 each coordinate Zn(2+). 3 residues coordinate Mg(2+): D450, D452, and D454. C795, C869, C876, and C879 together coordinate Zn(2+).

This sequence belongs to the RNA polymerase beta' chain family. The RNAP catalytic core consists of 2 alpha, 1 beta, 1 beta' and 1 omega subunit. When a sigma factor is associated with the core the holoenzyme is formed, which can initiate transcription. Mg(2+) is required as a cofactor. Zn(2+) serves as cofactor.

It carries out the reaction RNA(n) + a ribonucleoside 5'-triphosphate = RNA(n+1) + diphosphate. Functionally, DNA-dependent RNA polymerase catalyzes the transcription of DNA into RNA using the four ribonucleoside triphosphates as substrates. The sequence is that of DNA-directed RNA polymerase subunit beta' from Clostridium botulinum (strain Eklund 17B / Type B).